We begin with the raw amino-acid sequence, 502 residues long: Rab11 family-interacting protein 4B (502 aa).

2 disordered regions span residues 1–49 (MSIQ…EEGI) and 71–98 (SALS…TTSS). Over residues 15–29 (EEGRGVERDSDRDSA) the composition is skewed to basic and acidic residues. The segment covering 71–80 (SALSSASLNE) has biased composition (polar residues). Residues 81–93 (EQFEDYGEGEDGD) show a composition bias toward acidic residues. The stretch at 228 to 482 (DVKTKLKQEN…EEINLRLRQY (255 aa)) forms a coiled coil. In terms of domain architecture, FIP-RBD spans 439-501 (EAKNLFATQT…DHNPSILEIK (63 aa)).

Homodimer. Forms a complex with Rab11 (rab11a or rab11b) and arf6.

It is found in the recycling endosome membrane. It localises to the cleavage furrow. Its subcellular location is the midbody. The protein resides in the cytoplasmic vesicle. Acts as a regulator of endocytic traffic by participating in membrane delivery. Required for the abscission step in cytokinesis, possibly by acting as an 'address tag' delivering recycling endosome membranes to the cleavage furrow during late cytokinesis. This is Rab11 family-interacting protein 4B (rab11fip4b) from Danio rerio (Zebrafish).